Consider the following 415-residue polypeptide: Peptide chain release factor subunit 1 (415 aa).

This sequence belongs to the eukaryotic release factor 1 family. As to quaternary structure, heterodimer of two subunits, one of which binds GTP.

It localises to the cytoplasm. Directs the termination of nascent peptide synthesis (translation) in response to the termination codons UAA, UAG and UGA. The polypeptide is Peptide chain release factor subunit 1 (Thermococcus kodakarensis (strain ATCC BAA-918 / JCM 12380 / KOD1) (Pyrococcus kodakaraensis (strain KOD1))).